The primary structure comprises 215 residues: Large ribosomal subunit protein bL25 (215 aa).

Over residues 192-203 (EEATEEEEEAAE) the composition is skewed to acidic residues. Positions 192-215 (EEATEEEEEAAEPEVIKRKEEEEE) are disordered. Residues 205-215 (EVIKRKEEEEE) are compositionally biased toward basic and acidic residues.

This sequence belongs to the bacterial ribosomal protein bL25 family. CTC subfamily. As to quaternary structure, part of the 50S ribosomal subunit; part of the 5S rRNA/L5/L18/L25 subcomplex. Contacts the 5S rRNA. Binds to the 5S rRNA independently of L5 and L18.

This is one of the proteins that binds to the 5S RNA in the ribosome where it forms part of the central protuberance. The chain is Large ribosomal subunit protein bL25 from Thermotoga maritima (strain ATCC 43589 / DSM 3109 / JCM 10099 / NBRC 100826 / MSB8).